A 752-amino-acid chain; its full sequence is Palmitoyltransferase AKR1 (752 aa).

2 disordered regions span residues 1–21 (MTAEEVDKESDPAIEDVKSDY) and 49–68 (ASSELKHENDQGEERDLGSV). The Cytoplasmic portion of the chain corresponds to 1-318 (MTAEEVDKES…FPLPQYFSAS (318 aa)). 2 stretches are compositionally biased toward basic and acidic residues: residues 9-21 (ESDPAIEDVKSDY) and 51-68 (SELKHENDQGEERDLGSV). 6 ANK repeats span residues 72 to 102 (PILERYHAACKQGDMKTLREMVESKVIDLSN), 108 to 137 (ERVSGLHWACINNRLSAVKYLAGAGAEVNF), 142 to 171 (LDATPLHWASKSGLVYIVDELLKAGADPNI), 175 to 208 (QGYNLLHTSVFSSNIMLVIYVLFFVVDGKEDVDQ), 212 to 241 (HQRTALQWATYQADALTVENLLKFNADVKN), and 245 to 274 (AGFTALHWGTVKGSIPVMDLLIKHGSDFFQ). A helical transmembrane segment spans residues 319–339 (TGKMLTFFLPWVLIPLVFYIF). At 340–341 (SK) the chain is on the lumenal side. Residues 342 to 362 (ITFFIALLINTIVLVISGLVL) form a helical membrane-spanning segment. Topologically, residues 363–380 (SRLVVPSYLLSKRHPILN) are cytoplasmic. Residues 381–401 (SPLLAGILSGTIAIAFFIWFT) traverse the membrane as a helical segment. Residues 402-412 (KISILTFTEKP) lie on the Lumenal side of the membrane. Residues 413-433 (VGNIIMLGFFIGLITLFIGLM) form a helical membrane-spanning segment. The Cytoplasmic segment spans residues 434-509 (KSDPGYIPGT…YNQIGLLNHK (76 aa)). The 51-residue stretch at 466–516 (HFCVHTWIRIPLRSKYDRDSACLISAFDHFCPWVYNQIGLLNHKLFYMFVV) folds into the DHHC domain. Residue Cys496 is the S-palmitoyl cysteine intermediate of the active site. A helical transmembrane segment spans residues 510 to 530 (LFYMFVVLLEISVWWFLPLMM). Residues 531–567 (EYFDELEDYLENRKGKHFGDCHFLGDEDLCFGLHHDT) are Lumenal-facing. Residues 568 to 588 (FNFLLLCWVIFQAFWVLCLIA) form a helical membrane-spanning segment. The Cytoplasmic segment spans residues 589–752 (VQTVQMLKGV…TLPNATEELV (164 aa)).

This sequence belongs to the DHHC palmitoyltransferase family. AKR/ZDHHC17 subfamily.

The protein resides in the early endosome membrane. It localises to the golgi apparatus membrane. It catalyses the reaction L-cysteinyl-[protein] + hexadecanoyl-CoA = S-hexadecanoyl-L-cysteinyl-[protein] + CoA. In terms of biological role, palmitoyltransferase specific for casein kinase 1. In Kluyveromyces lactis (strain ATCC 8585 / CBS 2359 / DSM 70799 / NBRC 1267 / NRRL Y-1140 / WM37) (Yeast), this protein is Palmitoyltransferase AKR1 (AKR1).